The primary structure comprises 392 residues: Acetyl-CoA acetyltransferase (392 aa).

C85 (acyl-thioester intermediate) is an active-site residue. Positions 206, 207, 209, and 332 each coordinate CoA. H336 serves as the catalytic Proton acceptor.

It belongs to the thiolase-like superfamily. Thiolase family. In terms of assembly, interacts with HMG-CoA synthase (HMGCS) that catalyzes the second step in the pathway and with a DUF35 protein. The acetoacetyl-CoA thiolase/HMG-CoA synthase complex channels the intermediate via a fused CoA-binding site, which allows for efficient coupling of the endergonic thiolase reaction with the exergonic HMGCS reaction.

It carries out the reaction 2 acetyl-CoA = acetoacetyl-CoA + CoA. Its pathway is metabolic intermediate biosynthesis; (R)-mevalonate biosynthesis; (R)-mevalonate from acetyl-CoA: step 1/3. Its function is as follows. Catalyzes the condensation of two acetyl-coA molecules into acetoacetyl-CoA. Functions in the mevalonate (MVA) pathway leading to isopentenyl diphosphate (IPP), a key precursor for the biosynthesis of isoprenoid compounds that are building blocks of archaeal membrane lipids. The sequence is that of Acetyl-CoA acetyltransferase from Methanocaldococcus jannaschii (strain ATCC 43067 / DSM 2661 / JAL-1 / JCM 10045 / NBRC 100440) (Methanococcus jannaschii).